The sequence spans 224 residues: UPF0173 metal-dependent hydrolase EF_1371 (224 aa).

Belongs to the UPF0173 family.

This is UPF0173 metal-dependent hydrolase EF_1371 from Enterococcus faecalis (strain ATCC 700802 / V583).